We begin with the raw amino-acid sequence, 507 residues long: Cysteine--tRNA ligase (507 aa).

Residue cysteine 29 participates in Zn(2+) binding. Positions 31–41 (PTVYDVPHIGN) match the 'HIGH' region motif. Residues cysteine 207, histidine 232, and glutamate 236 each coordinate Zn(2+). Positions 265-269 (KMSKS) match the 'KMSKS' region motif. Lysine 268 provides a ligand contact to ATP.

It belongs to the class-I aminoacyl-tRNA synthetase family. Monomer. It depends on Zn(2+) as a cofactor.

The protein resides in the cytoplasm. The enzyme catalyses tRNA(Cys) + L-cysteine + ATP = L-cysteinyl-tRNA(Cys) + AMP + diphosphate. The sequence is that of Cysteine--tRNA ligase from Neorickettsia sennetsu (strain ATCC VR-367 / Miyayama) (Ehrlichia sennetsu).